A 2036-amino-acid chain; its full sequence is Bikaverin polyketide synthase bik1 (2036 aa).

Residues 8 to 242 are N-terminal acylcarrier protein transacylase domain (SAT); that stretch reads YVFGDQSTPV…YPAPIYGPYH (235 aa). The 432-residue stretch at 370–801 folds into the Ketosynthase family 3 (KS3) domain; it reads ENKIAIIGFS…GGNTSLLLED (432 aa). Catalysis depends on for beta-ketoacyl synthase activity residues Cys-541, His-676, and His-718. The acyl/malonyl transferases stretch occupies residues 908–1209; it reads FLFTGQGAQE…LASLRRKEDH (302 aa). Residue Ser-997 is the For acyl/malonyl transferase activity of the active site. The N-terminal hotdog fold stretch occupies residues 1293 to 1425; it reads HNVIEQVHGD…CDVAVENPSS (133 aa). Positions 1293-1600 constitute a PKS/mFAS DH domain; it reads HNVIEQVHGD…FKKVARKVLE (308 aa). Positions 1295–1599 are product template (PT) domain; the sequence is VIEQVHGDKR…TFKKVARKVL (305 aa). Residue His-1325 is the Proton acceptor; for dehydratase activity of the active site. The interval 1452–1600 is C-terminal hotdog fold; it reads SAHMMRRGLL…FKKVARKVLE (149 aa). Asp-1511 (proton donor; for dehydratase activity) is an active-site residue. Residues 1628–1654 form a disordered region; the sequence is VLTPPSTTSHSVGTTSPPEPTESPVGS. Residues 1638–1654 show a composition bias toward low complexity; the sequence is SVGTTSPPEPTESPVGS. The region spanning 1653 to 1730 is the Carrier domain; that stretch reads GSASGLIQKA…DLKSFLGAND (78 aa). Ser-1690 carries the O-(pantetheine 4'-phosphoryl)serine modification. Residues 1733-1758 are disordered; it reads FSSSNSEAESSASSAASTSPSDHGDD. Residues 1734-1753 show a composition bias toward low complexity; sequence SSSNSEAESSASSAASTSPS. The active-site For thioesterase activity is Ser-1857.

It participates in secondary metabolite biosynthesis. Functionally, polyketide synthase; part of the gene cluster that mediates the biosynthesis of bikaverin, a red pigment also considered as a mycotoxin. The first stage is catalyzed by the polyketide synthase bik1, which catalyzes the formation of the intermediate SMA76a also knowm as pre-bikaverin. FAD-dependent monooxygenase bik2 might then be responsible for the oxidation of pre-bikaverin to oxo-pre-bikaverin which is in turn methylated by the O-methyltransferase bik3 to me-oxo-pre-bikaverin. A further cycle of oxydation and methylation by bik2 and bik3 leads to the final product of bikaverin, via a nor-bikaverin intermediate. This is Bikaverin polyketide synthase bik1 from Gibberella fujikuroi (strain CBS 195.34 / IMI 58289 / NRRL A-6831) (Bakanae and foot rot disease fungus).